A 477-amino-acid polypeptide reads, in one-letter code: Protein translocase subunit SecY (477 aa).

A run of 10 helical transmembrane segments spans residues 28–48 (FMIS…LAII), 67–89 (FFSL…AVGI), 130–150 (IITL…ATNS), 165–185 (DFVA…VFLG), 196–216 (GITL…FIAA), 234–254 (AISF…TTFI), 286–306 (SAGV…VTIA), 329–349 (GIVL…YIQI), 387–407 (FIGA…SALI), and 413–433 (LSLG…FMSA).

This sequence belongs to the SecY/SEC61-alpha family. In terms of assembly, component of the Sec protein translocase complex. Heterotrimer consisting of SecY, SecE and SecG subunits. The heterotrimers can form oligomers, although 1 heterotrimer is thought to be able to translocate proteins. Interacts with the ribosome. Interacts with SecDF, and other proteins may be involved. Interacts with SecA.

It localises to the cell membrane. Functionally, the central subunit of the protein translocation channel SecYEG. Consists of two halves formed by TMs 1-5 and 6-10. These two domains form a lateral gate at the front which open onto the bilayer between TMs 2 and 7, and are clamped together by SecE at the back. The channel is closed by both a pore ring composed of hydrophobic SecY resides and a short helix (helix 2A) on the extracellular side of the membrane which forms a plug. The plug probably moves laterally to allow the channel to open. The ring and the pore may move independently. This chain is Protein translocase subunit SecY, found in Mycoplasma pneumoniae (strain ATCC 29342 / M129 / Subtype 1) (Mycoplasmoides pneumoniae).